The following is a 127-amino-acid chain: uncharacterized protein (127 aa).

Belongs to the transcriptional regulatory CopG/NikR family.

This is an uncharacterized protein from Methanocaldococcus jannaschii (strain ATCC 43067 / DSM 2661 / JAL-1 / JCM 10045 / NBRC 100440) (Methanococcus jannaschii).